Consider the following 699-residue polypeptide: UvrABC system protein C (699 aa).

Over residues 1–51 (MIQHPTDTPEVAADAAAEPERAAGAAGATPQPSQDAVEPAADVDAATASLA) the composition is skewed to low complexity. Residues 1–59 (MIQHPTDTPEVAADAAAEPERAAGAAGATPQPSQDAVEPAADVDAATASLAAEDDDEPV) are disordered. A GIY-YIG domain is found at 92–170 (TSPGVYRMLN…IKQLRPRFNV (79 aa)). The 36-residue stretch at 280-315 (RLVKQELAGEMEKASAELEFETAALYRDRLAALSAI) folds into the UVR domain.

It belongs to the UvrC family. In terms of assembly, interacts with UvrB in an incision complex.

The protein resides in the cytoplasm. Its function is as follows. The UvrABC repair system catalyzes the recognition and processing of DNA lesions. UvrC both incises the 5' and 3' sides of the lesion. The N-terminal half is responsible for the 3' incision and the C-terminal half is responsible for the 5' incision. This is UvrABC system protein C from Rhodopseudomonas palustris (strain BisB18).